The chain runs to 905 residues: Coatomer subunit beta' (905 aa).

8 WD repeats span residues A13 to T52, V55 to M94, A97 to Q136, G140 to T180, G183 to T224, G227 to T266, S350 to F388, and S390 to K425. N6-acetyllysine is present on K627. One copy of the WD 9 repeat lies at I746 to K783. The segment at E837–D905 is disordered. The residue at position 859 (S859) is a Phosphoserine. Residues Q867–I891 are a coiled coil. The segment covering E878–D905 has biased composition (acidic residues).

Belongs to the WD repeat COPB2 family. Oligomeric complex that consists of at least the alpha, beta, beta', gamma, delta, epsilon and zeta subunits. Probably interacts with PEX11A. Interacts with JAGN1. Interacts with SCYL1.

The protein resides in the cytoplasm. It localises to the cytosol. It is found in the golgi apparatus membrane. Its subcellular location is the cytoplasmic vesicle. The protein localises to the COPI-coated vesicle membrane. Its function is as follows. The coatomer is a cytosolic protein complex that binds to dilysine motifs and reversibly associates with Golgi non-clathrin-coated vesicles, which further mediate biosynthetic protein transport from the ER, via the Golgi up to the trans Golgi network. Coatomer complex is required for budding from Golgi membranes, and is essential for the retrograde Golgi-to-ER transport of dilysine-tagged proteins. In mammals, the coatomer can only be recruited by membranes associated to ADP-ribosylation factors (ARFs), which are small GTP-binding proteins; the complex also influences the Golgi structural integrity, as well as the processing, activity, and endocytic recycling of LDL receptors. Functionally, this coatomer complex protein, essential for Golgi budding and vesicular trafficking, is a selective binding protein (RACK) for protein kinase C, epsilon type. It binds to Golgi membranes in a GTP-dependent manner. The polypeptide is Coatomer subunit beta' (Copb2) (Rattus norvegicus (Rat)).